We begin with the raw amino-acid sequence, 808 residues long: Phenylalanine--tRNA ligase beta subunit (808 aa).

The tRNA-binding domain occupies 40 to 149 (RPELDFVKIV…DQAEVGKTIR (110 aa)). Residues 407–484 (HKEVRIHTDI…RTKGYDTIQV (78 aa)) enclose the B5 domain. Mg(2+) is bound by residues D462, D468, E471, and E472. Residues 716 to 808 (SQFPEAEIDL…LAGKNGFVLR (93 aa)) enclose the FDX-ACB domain.

This sequence belongs to the phenylalanyl-tRNA synthetase beta subunit family. Type 1 subfamily. In terms of assembly, tetramer of two alpha and two beta subunits. Mg(2+) serves as cofactor.

The protein localises to the cytoplasm. The catalysed reaction is tRNA(Phe) + L-phenylalanine + ATP = L-phenylalanyl-tRNA(Phe) + AMP + diphosphate + H(+). This Leptospira interrogans serogroup Icterohaemorrhagiae serovar copenhageni (strain Fiocruz L1-130) protein is Phenylalanine--tRNA ligase beta subunit.